The following is a 549-amino-acid chain: Nectin-3 (549 aa).

The signal sequence occupies residues 1–57 (MARTLRPSPLCPGGGKAQLSSASLLGAGLLLQPPTPPPLLLLLFPLLLFSRLCGALA). Residues 58 to 404 (GPIIVEPHVT…ATIKDDTIAT (347 aa)) are Extracellular-facing. Positions 59 to 165 (PIIVEPHVTA…GNAQSSTTVT (107 aa)) constitute an Ig-like V-type domain. 6 N-linked (GlcNAc...) asparagine glycosylation sites follow: asparagine 73, asparagine 83, asparagine 125, asparagine 186, asparagine 222, and asparagine 331. A disulfide bond links cysteine 78 and cysteine 148. Ig-like C2-type domains lie at 170–258 (PTVS…KDIR) and 269–354 (PEVS…KVIY). Disulfide bonds link cysteine 193–cysteine 246 and cysteine 291–cysteine 338. The chain crosses the membrane as a helical span at residues 405–425 (IIASVVGGALFIVLVSVLAGI). Residues 426 to 549 (FCYRRRRTFR…SVISRREWYV (124 aa)) lie on the Cytoplasmic side of the membrane.

It belongs to the nectin family. Cis- and trans-homodimer. Can form trans-heterodimers with NECTIN1, NECTIN2, PVR, IGSF4B/Necl-1 and with IGSF4. Interaction between NECTIN1 and NECTIN3 on the pre- and postsynaptic sites, respectively, initiates the formation of puncta adherentia junctions between axons and dendrites. Interacts (via Cytoplasmic domain) with AFDN, providing a connection with the actin cytoskeleton. Binds with low affinity to TIGIT. In terms of assembly, (Microbial infection) Interacts with C.difficile toxin TcdB, suggesting that it may contribute to TcdB toxin entry into cells. It was however shown that NECTIN3/PVRL3 does not act as a major receptor for TcdB. Predominantly expressed in testis and placenta as well as in many cell lines, including epithelial cell lines.

Its subcellular location is the cell membrane. It localises to the postsynaptic cell membrane. It is found in the cell junction. The protein resides in the adherens junction. Functionally, cell adhesion molecule that promotes cell-cell adhesion through heterophilic trans-interactions with nectins-like or other nectins, such as trans-interaction with NECTIN2 at Sertoli-spermatid junctions. Trans-interaction with PVR induces activation of CDC42 and RAC small G proteins through common signaling molecules such as SRC and RAP1. Induces endocytosis-mediated down-regulation of PVR from the cell surface, resulting in reduction of cell movement and proliferation. Involved in axon guidance by promoting contacts between the commissural axons and the floor plate cells. Also involved in the formation of cell-cell junctions, including adherens junctions and synapses. Promotes formation of checkerboard-like cellular pattern of hair cells and supporting cells in the auditory epithelium via heterophilic interaction with NECTIN1: NECTIN1 is present in the membrane of hair cells and associates with NECTIN3 on supporting cells, thereby mediating heterotypic adhesion between these two cell types. Plays a role in the morphology of the ciliary body. In Homo sapiens (Human), this protein is Nectin-3.